Here is a 487-residue protein sequence, read N- to C-terminus: UPF0276 protein SAV_2218 (487 aa).

The interval 1–285 (MVEEGTMERL…LGAIRKTLEK (285 aa)) is UPF0276. A unknown region spans residues 286–487 (AGTRAGASAG…RATRRVLLRR (202 aa)). The interval 319 to 348 (AGPRRGGADAQAAPRAAGTEALSAASTSTP) is disordered. Residues 326 to 348 (ADAQAAPRAAGTEALSAASTSTP) are compositionally biased toward low complexity.

This sequence in the N-terminal section; belongs to the UPF0276 family.

The polypeptide is UPF0276 protein SAV_2218 (Streptomyces avermitilis (strain ATCC 31267 / DSM 46492 / JCM 5070 / NBRC 14893 / NCIMB 12804 / NRRL 8165 / MA-4680)).